An 88-amino-acid chain; its full sequence is Apolipoprotein C-I (88 aa).

An N-terminal signal peptide occupies residues 1-26 (MRLFLSLPVLVVVLAMVLEGPAPAQA).

The protein belongs to the apolipoprotein C1 family.

It localises to the secreted. Its function is as follows. Inhibitor of lipoprotein binding to the low density lipoprotein (LDL) receptor, LDL receptor-related protein, and very low density lipoprotein (VLDL) receptor. Associates with high density lipoproteins (HDL) and the triacylglycerol-rich lipoproteins in the plasma and makes up about 10% of the protein of the VLDL and 2% of that of HDL. Appears to interfere directly with fatty acid uptake and is also the major plasma inhibitor of cholesteryl ester transfer protein (CETP). Binds free fatty acids and reduces their intracellular esterification. Modulates the interaction of APOE with beta-migrating VLDL and inhibits binding of beta-VLDL to the LDL receptor-related protein. The sequence is that of Apolipoprotein C-I (APOC1) from Arctocephalus gazella (Antarctic fur seal).